The chain runs to 278 residues: 3-methyl-2-oxobutanoate hydroxymethyltransferase (278 aa).

Mg(2+)-binding residues include D43 and D82. Residues 43–44 (DS), D82, and K112 each bind 3-methyl-2-oxobutanoate. E114 contacts Mg(2+). The active-site Proton acceptor is the E181.

This sequence belongs to the PanB family. As to quaternary structure, homodecamer; pentamer of dimers. Mg(2+) is required as a cofactor.

The protein resides in the cytoplasm. The enzyme catalyses 3-methyl-2-oxobutanoate + (6R)-5,10-methylene-5,6,7,8-tetrahydrofolate + H2O = 2-dehydropantoate + (6S)-5,6,7,8-tetrahydrofolate. It functions in the pathway cofactor biosynthesis; (R)-pantothenate biosynthesis; (R)-pantoate from 3-methyl-2-oxobutanoate: step 1/2. Its function is as follows. Catalyzes the reversible reaction in which hydroxymethyl group from 5,10-methylenetetrahydrofolate is transferred onto alpha-ketoisovalerate to form ketopantoate. The chain is 3-methyl-2-oxobutanoate hydroxymethyltransferase from Desulfitobacterium hafniense (strain Y51).